Consider the following 234-residue polypeptide: Glutamine synthetase (234 aa).

In terms of domain architecture, GS catalytic spans 1-234 (KAQEPWFGIE…TRLLVETTLL (234 aa)). The segment at 126–157 (GSGGHVNFSNRQPESPPAGKQSRSSAKKLGKR) is disordered.

Belongs to the glutamine synthetase family. Homooctamer.

Its subcellular location is the cytoplasm. It carries out the reaction L-glutamate + NH4(+) + ATP = L-glutamine + ADP + phosphate + H(+). In Dunaliella salina (Green alga), this protein is Glutamine synthetase.